The following is a 247-amino-acid chain: Retbindin (247 aa).

The signal sequence occupies residues 1-31 (MAHEGHSQHSGLVWALRPILAWIFLVACGWS). Intrachain disulfides connect C99-C169, C106-C146, C139-C183, and C152-C165.

It belongs to the folate receptor family. Not N-glycosylated. Expressed in the peripheral retina where it localizes to the inter-photoreceptor matrix (at protein level). May be produced by rod photoreceptors (at protein level).

The protein resides in the secreted. It localises to the extracellular space. It is found in the extracellular matrix. The protein localises to the interphotoreceptor matrix. Its subcellular location is the cell membrane. Its function is as follows. Riboflavin-binding protein which might have a role in retinal flavin transport. This is Retbindin (Rtbdn) from Mus musculus (Mouse).